The chain runs to 573 residues: DNA ligase (573 aa).

Glu-248 contributes to the ATP binding site. Catalysis depends on Lys-250, which acts as the N6-AMP-lysine intermediate. The ATP site is built by Arg-255, Arg-270, Glu-299, Phe-340, Arg-432, and Lys-438.

This sequence belongs to the ATP-dependent DNA ligase family. Mg(2+) serves as cofactor.

It catalyses the reaction ATP + (deoxyribonucleotide)n-3'-hydroxyl + 5'-phospho-(deoxyribonucleotide)m = (deoxyribonucleotide)n+m + AMP + diphosphate.. Functionally, DNA ligase that seals nicks in double-stranded DNA during DNA replication, DNA recombination and DNA repair. This chain is DNA ligase, found in Methanocaldococcus jannaschii (strain ATCC 43067 / DSM 2661 / JAL-1 / JCM 10045 / NBRC 100440) (Methanococcus jannaschii).